The primary structure comprises 313 residues: E3 ubiquitin-protein ligase siah2 (313 aa).

Residues 1-49 form a disordered region; the sequence is MSRPSSAGPCASKPCGKQKQPPPPPPHAPSLPATISGGPGASAPPAPTA. Positions 20-29 are enriched in pro residues; it reads QPPPPPPHAP. The RING-type zinc finger occupies 69–104; it reads CPVCFDYVLPPILQCQAGHLVCNQCRQKLSCCPTCR. The tract at residues 119 to 311 is SBD; the sequence is VASAVLFPCK…LGINVTISTC (193 aa). The SIAH-type zinc finger occupies 122–182; the sequence is AVLFPCKYAS…VMQHLTHSHK (61 aa). Zn(2+)-binding residues include Cys127, Cys134, His146, Cys150, Cys157, Cys164, His176, and His181.

The protein belongs to the SINA (Seven in absentia) family. As to quaternary structure, homodimer. In terms of tissue distribution, widely expressed in early embryos until stage 40. It is then expressed in brain, spinal cord and in the developing and mature eye.

It is found in the cytoplasm. It carries out the reaction S-ubiquitinyl-[E2 ubiquitin-conjugating enzyme]-L-cysteine + [acceptor protein]-L-lysine = [E2 ubiquitin-conjugating enzyme]-L-cysteine + N(6)-ubiquitinyl-[acceptor protein]-L-lysine.. The protein operates within protein modification; protein ubiquitination. E3 ubiquitin-protein ligase that mediates ubiquitination and subsequent proteasomal degradation of target proteins. E3 ubiquitin ligases accept ubiquitin from an E2 ubiquitin-conjugating enzyme in the form of a thioester and then directly transfers the ubiquitin to targeted substrates. Involved in eye morphogenesis, probably triggers the ubiquitin-mediated degradation of different substrates. May play a role in the regulation of the cellular clock function. This Xenopus laevis (African clawed frog) protein is E3 ubiquitin-protein ligase siah2 (siah2).